The sequence spans 94 residues: MSDSFHYQYDRASPERLKPTIYSWTRLRQSTRAQNENEQAKRRQGILEHKRGGSMEMNKFIDESAYMEWEKQLENASEDYAIEPSDLEEEVDQL.

This is an uncharacterized protein from Schizosaccharomyces pombe (strain 972 / ATCC 24843) (Fission yeast).